A 217-amino-acid chain; its full sequence is Nuclear transcription factor Y subunit C-3 (217 aa).

Polar residues predominate over residues M1–G28. Disordered stretches follow at residues M1–S29 and P198–N217.

It belongs to the NFYC/HAP5 subunit family. In terms of assembly, heterotrimeric transcription factor composed of three components, NF-YA, NF-YB and NF-YC. NF-YB and NF-YC must interact and dimerize for NF-YA association and DNA binding. Ubiquitous.

Its subcellular location is the nucleus. In terms of biological role, stimulates the transcription of various genes by recognizing and binding to a CCAAT motif in promoters. The sequence is that of Nuclear transcription factor Y subunit C-3 (NFYC3) from Arabidopsis thaliana (Mouse-ear cress).